Reading from the N-terminus, the 263-residue chain is Endonuclease 8 (263 aa).

P2 functions as the Schiff-base intermediate with DNA in the catalytic mechanism. E3 (proton donor) is an active-site residue. K53 functions as the Proton donor; for beta-elimination activity in the catalytic mechanism. DNA is bound by residues Q70, R125, and N169. Residues 229-263 (KVFHRDGELCERCGGIIEKTTLSSRPFYWCPGCQH) form an FPG-type zinc finger. The Proton donor; for delta-elimination activity role is filled by R253.

It belongs to the FPG family. Zn(2+) is required as a cofactor.

It carries out the reaction 2'-deoxyribonucleotide-(2'-deoxyribose 5'-phosphate)-2'-deoxyribonucleotide-DNA = a 3'-end 2'-deoxyribonucleotide-(2,3-dehydro-2,3-deoxyribose 5'-phosphate)-DNA + a 5'-end 5'-phospho-2'-deoxyribonucleoside-DNA + H(+). Involved in base excision repair of DNA damaged by oxidation or by mutagenic agents. Acts as a DNA glycosylase that recognizes and removes damaged bases. Has a preference for oxidized pyrimidines, such as thymine glycol, 5,6-dihydrouracil and 5,6-dihydrothymine. Has AP (apurinic/apyrimidinic) lyase activity and introduces nicks in the DNA strand. Cleaves the DNA backbone by beta-delta elimination to generate a single-strand break at the site of the removed base with both 3'- and 5'-phosphates. In Escherichia coli (strain SE11), this protein is Endonuclease 8.